Here is a 902-residue protein sequence, read N- to C-terminus: Androgen receptor (902 aa).

Positions 1-540 are modulating; the sequence is MEVQLGLGRV…PIDYYFPPQK (540 aa). An interaction with ZNF318 region spans residues 1-569; the sequence is MEVQLGLGRV…GSCKVFFKRA (569 aa). Disordered stretches follow at residues 35–146 and 194–224; these read QNPG…LSLL and QQEVISEGSSSVRAREATGAPSSSKDSYLGG. Serine 61 bears the Phosphoserine; by CDK9 mark. The residue at position 75 (serine 75) is a Phosphoserine. Low complexity predominate over residues 94-103; sequence QPSQQQSASE. 2 stretches are compositionally biased toward polar residues: residues 196-205 and 213-224; these read EVISEGSSSV and APSSSKDSYLGG. Tyrosine 221 is modified (phosphotyrosine; by CSK). A Phosphoserine modification is found at serine 254. Tyrosine 265 is subject to Phosphotyrosine; by CSK and TNK2. Serine 290 carries the post-translational modification Phosphoserine. Residues tyrosine 305, tyrosine 344, tyrosine 355, and tyrosine 360 each carry the phosphotyrosine; by CSK modification. Tyrosine 361 carries the post-translational modification Phosphotyrosine; by CSK and TNK2. A Glycyl lysine isopeptide (Lys-Gly) (interchain with G-Cter in SUMO) cross-link involves residue lysine 384. Tyrosine 391 is modified (phosphotyrosine; by CSK). A disordered region spans residues 439 to 465; it reads EGQLYGPGGGGGSSSPSDAGPVAPYGY. Residue lysine 503 forms a Glycyl lysine isopeptide (Lys-Gly) (interchain with G-Cter in SUMO) linkage. A phosphotyrosine; by CSK mark is found at tyrosine 517 and tyrosine 534. The tract at residues 534 to 901 is interaction with LPXN; that stretch reads YYFPPQKTCL…GKVKPIYFHT (368 aa). The segment at residues 541–614 is a DNA-binding region (nuclear receptor); the sequence is TCLICGDEAS…AGMTLGARKL (74 aa). 2 NR C4-type zinc fingers span residues 542 to 562 and 578 to 602; these read CLICGDEASGCHYGALTCGSC and CASRNDCTIDKFRRKNCPSCRLRKC. The interaction with HIPK3 stretch occupies residues 554–644; that stretch reads YGALTCGSCK…TEDPSQKMTV (91 aa). Residues 574–901 form an interaction with CCAR1 region; the sequence is QKYLCASRND…GKVKPIYFHT (328 aa). The tract at residues 607-901 is interaction with KAT7; sequence MTLGARKLKK…GKVKPIYFHT (295 aa). A Phosphoserine modification is found at serine 633. The NR LBD domain maps to 651 to 882; sequence ECQPIFLNVL…DFPEMMAEII (232 aa). Residues asparagine 688 and arginine 735 each contribute to the 17beta-hydroxy-5alpha-androstan-3-one site. Residues lysine 828 and lysine 830 each participate in a glycyl lysine isopeptide (Lys-Gly) (interchain with G-Cter in ubiquitin) cross-link. Threonine 860 is a 17beta-hydroxy-5alpha-androstan-3-one binding site. At tyrosine 898 the chain carries Phosphotyrosine; by CSK.

Belongs to the nuclear hormone receptor family. NR3 subfamily. Binds DNA as a homodimer. Part of a ternary complex containing AR, EFCAB6/DJBP and PARK7. Interacts with HIPK3 and NR0B2 in the presence of androgen. The ligand binding domain interacts with KAT7/HBO1 in the presence of dihydrotestosterone. Interacts with EFCAB6/DJBP, PQBP1, RANBP9, RBAK, SPDEF, SRA1, TGFB1I1, ZNF318 and RREB1. Interacts with ZMIZ1/ZIMP10 and ZMIZ2/ZMIP7 which both enhance its transactivation activity. Interacts with SLC30A9 and RAD54L2/ARIP4. Interacts with MACROD1 (via macro domain). Interacts via the ligand-binding domain with LXXLL and FXXLF motifs from NCOA1, NCOA2, NCOA3 and MAGEA11. Interacts (via nuclear receptor DNA binding domain and nuclear receptor ligand binding domain) with NCOA4. The AR N-terminal poly-Gln region binds Ran resulting in enhancement of AR-mediated transactivation. Ran-binding decreases as the poly-Gln length increases. Interacts with HIP1 (via coiled coil domain). Interacts (via ligand-binding domain) with TRIM68. Interacts with TNK2. Interacts with USP26. Interacts with RNF6. Interacts (regulated by RNF6 probably through polyubiquitination) with RNF14; regulates AR transcriptional activity. Interacts with PRMT2 and TRIM24. Interacts with RACK1. Interacts with RANBP10; this interaction enhances dihydrotestosterone-induced AR transcriptional activity. Interacts with PRPF6 in a hormone-independent way; this interaction enhances dihydrotestosterone-induced AR transcriptional activity. Interacts with STK4/MST1. Interacts with ZIPK/DAPK3. Interacts with LPXN. Interacts with MAK. Part of a complex containing AR, MAK and NCOA3. Interacts with CRY1. Interacts with CCAR1 and GATA2. Interacts with BUD31. Interacts with ARID4A. Interacts with ARID4B. Interacts (via NR LBD domain) with ZBTB7A; the interaction is direct and androgen-dependent. Interacts with NCOR1. Interacts with NCOR2. Interacts with CRY2 in a ligand-dependent manner. In terms of processing, phosphorylated in prostate cancer cells in response to several growth factors including EGF. Phosphorylation is induced by c-Src kinase (CSK). Tyr-517 is one of the major phosphorylation sites and an increase in phosphorylation and Src kinase activity is associated with prostate cancer progression. Phosphorylation by TNK2 enhances the DNA-binding and transcriptional activity. Phosphorylation at Ser-61 by CDK9 regulates AR promoter selectivity and cell growth. Phosphorylation by PAK6 leads to AR-mediated transcription inhibition. Post-translationally, sumoylated on Lys-384 (major) and Lys-503. Ubiquitinated. Deubiquitinated by USP26. 'Lys-6' and 'Lys-27'-linked polyubiquitination by RNF6 modulates AR transcriptional activity and specificity. Palmitoylated by ZDHHC7 and ZDHHC21. Palmitoylation is required for plasma membrane targeting and for rapid intracellular signaling via ERK and AKT kinases and cAMP generation. As to expression, highest levels in the seminal vesicle, ventral prostate and coagulating gland with lower levels in the kidney and levator ani muscle.

The protein localises to the nucleus. The protein resides in the cytoplasm. Steroid hormone receptors are ligand-activated transcription factors that regulate eukaryotic gene expression and affect cellular proliferation and differentiation in target tissues. Transcription factor activity is modulated by bound coactivator and corepressor proteins like ZBTB7A that recruits NCOR1 and NCOR2 to the androgen response elements/ARE on target genes, negatively regulating androgen receptor signaling and androgen-induced cell proliferation. Transcription activation is also down-regulated by NR0B2. Activated, but not phosphorylated, by HIPK3 and ZIPK/DAPK3. In Rattus norvegicus (Rat), this protein is Androgen receptor (Ar).